A 149-amino-acid chain; its full sequence is UPF0260 protein PSPPH_1551 (149 aa).

The protein belongs to the UPF0260 family.

In Pseudomonas savastanoi pv. phaseolicola (strain 1448A / Race 6) (Pseudomonas syringae pv. phaseolicola (strain 1448A / Race 6)), this protein is UPF0260 protein PSPPH_1551.